Consider the following 417-residue polypeptide: Transmembrane protease serine 11G (417 aa).

Residues 1-22 (MYQPGILGRRKRVCKPWTVALT) are Cytoplasmic-facing. The helical; Signal-anchor for type II membrane protein transmembrane segment at 23–43 (TTAALLALAVLIGLLVYFLVY) threads the bilayer. The Extracellular segment spans residues 44-417 (EEKTHYYQAS…RNWIKSKTNI (374 aa)). One can recognise an SEA domain in the interval 46 to 165 (KTHYYQASFW…PYLREMNAAQ (120 aa)). A Peptidase S1 domain is found at 186-416 (IADGKPAGSN…YRNWIKSKTN (231 aa)). C211 and C227 form a disulfide bridge. Active-site charge relay system residues include H226 and D271. 2 disulfide bridges follow: C336–C352 and C363–C392. The Charge relay system role is filled by S367.

This sequence belongs to the peptidase S1 family. As to expression, highest expression in lung and tongue. Also expressed in brain, colon, heart and liver. Isoform 1 is the predominant form in tongue whereas both isoforms are expressed in similar amounts in lung. At the cellular level, expression is confined to epithelial cells within the cleft of the circumvallate papillae extending into the ducts of the minor salivary glands, the respiratory epithelium of the nasal cavity and tear gland ducts.

It is found in the membrane. This is Transmembrane protease serine 11G (Tmprss11g) from Rattus norvegicus (Rat).